The sequence spans 437 residues: Adenylosuccinate synthetase (437 aa).

GTP contacts are provided by residues 12-18 and 40-42; these read GDEGKGK and GHT. Asp-13 (proton acceptor) is an active-site residue. Residues Asp-13 and Gly-40 each contribute to the Mg(2+) site. Residues 13-16, 38-41, Thr-128, Arg-142, Gln-223, Thr-238, and Arg-302 each bind IMP; these read DEGK and NAGH. The active-site Proton donor is His-41. 298-304 lines the substrate pocket; sequence TTTGRKR. GTP-binding positions include Arg-304, 330–332, and 412–414; these read KLD and SLG.

Belongs to the adenylosuccinate synthetase family. In terms of assembly, homodimer. Mg(2+) is required as a cofactor.

It localises to the cytoplasm. It carries out the reaction IMP + L-aspartate + GTP = N(6)-(1,2-dicarboxyethyl)-AMP + GDP + phosphate + 2 H(+). The protein operates within purine metabolism; AMP biosynthesis via de novo pathway; AMP from IMP: step 1/2. Its function is as follows. Plays an important role in the de novo pathway of purine nucleotide biosynthesis. Catalyzes the first committed step in the biosynthesis of AMP from IMP. This chain is Adenylosuccinate synthetase, found in Trichodesmium erythraeum (strain IMS101).